Reading from the N-terminus, the 91-residue chain is Small ribosomal subunit protein bS20 (91 aa).

Residues 1–21 (MPLHKSAEKRLRQSARRNERN) show a composition bias toward basic and acidic residues. 2 disordered regions span residues 1–25 (MPLHKSAEKRLRQSARRNERNRARK) and 70–91 (PNKASRKKSQLSRMLNNYMKAE). Residues 70–79 (PNKASRKKSQ) show a composition bias toward basic residues.

The protein belongs to the bacterial ribosomal protein bS20 family.

Its function is as follows. Binds directly to 16S ribosomal RNA. This chain is Small ribosomal subunit protein bS20, found in Chlorobium phaeobacteroides (strain BS1).